Here is a 118-residue protein sequence, read N- to C-terminus: V-type proton ATPase subunit G 1 (118 aa).

An N-acetylalanine modification is found at alanine 2.

Belongs to the V-ATPase G subunit family. As to quaternary structure, V-ATPase is a heteromultimeric enzyme made up of two complexes: the ATP-hydrolytic V1 complex and the proton translocation V0 complex. The V1 complex consists of three catalytic AB heterodimers that form a heterohexamer, three peripheral stalks each consisting of EG heterodimers, one central rotor including subunits D and F, and the regulatory subunits C and H. The proton translocation complex V0 consists of the proton transport subunit a, a ring of proteolipid subunits c9c'', rotary subunit d, subunits e and f, and the accessory subunits ATP6AP1/Ac45 and ATP6AP2/PRR. As to expression, kidney; localizes to early distal nephron, encompassing thick ascending limbs and distal convoluted tubules (at protein level). Ubiquitous.

The protein localises to the apical cell membrane. Its function is as follows. Subunit of the V1 complex of vacuolar(H+)-ATPase (V-ATPase), a multisubunit enzyme composed of a peripheral complex (V1) that hydrolyzes ATP and a membrane integral complex (V0) that translocates protons. V-ATPase is responsible for acidifying and maintaining the pH of intracellular compartments and in some cell types, is targeted to the plasma membrane, where it is responsible for acidifying the extracellular environment. In aerobic conditions, involved in intracellular iron homeostasis, thus triggering the activity of Fe(2+) prolyl hydroxylase (PHD) enzymes, and leading to HIF1A hydroxylation and subsequent proteasomal degradation. In Mus musculus (Mouse), this protein is V-type proton ATPase subunit G 1 (Atp6v1g1).